The following is a 199-amino-acid chain: Recombination protein RecR (199 aa).

The C4-type zinc-finger motif lies at 58-73; that stretch reads CVRCGNITNADLCGIC. Residues 81–176 enclose the Toprim domain; it reads GELCVVEDVA…QVTSLAQGVP (96 aa).

Belongs to the RecR family.

Functionally, may play a role in DNA repair. It seems to be involved in an RecBC-independent recombinational process of DNA repair. It may act with RecF and RecO. In Cereibacter sphaeroides (strain ATCC 17029 / ATH 2.4.9) (Rhodobacter sphaeroides), this protein is Recombination protein RecR.